The sequence spans 241 residues: Small ribosomal subunit protein uS3 (241 aa).

One can recognise a KH type-2 domain in the interval 39–109; sequence VRNYVNKNLS…PIRINVVEVA (71 aa). The disordered stretch occupies residues 213–241; sequence ADEQPTNREPQQRRRQQQRRRQQFEDRSE.

Belongs to the universal ribosomal protein uS3 family. As to quaternary structure, part of the 30S ribosomal subunit. Forms a tight complex with proteins S10 and S14.

Binds the lower part of the 30S subunit head. Binds mRNA in the 70S ribosome, positioning it for translation. In Acaryochloris marina (strain MBIC 11017), this protein is Small ribosomal subunit protein uS3.